A 385-amino-acid polypeptide reads, in one-letter code: Glutamate 5-kinase (385 aa).

Lysine 17 contributes to the ATP binding site. Residues serine 64, aspartate 151, and asparagine 165 each coordinate substrate. Residue 185 to 186 (SD) coordinates ATP. In terms of domain architecture, PUA spans 291–367 (SGTVRVDAGA…DQIENVLGYS (77 aa)).

The protein belongs to the glutamate 5-kinase family.

It is found in the cytoplasm. The catalysed reaction is L-glutamate + ATP = L-glutamyl 5-phosphate + ADP. It functions in the pathway amino-acid biosynthesis; L-proline biosynthesis; L-glutamate 5-semialdehyde from L-glutamate: step 1/2. In terms of biological role, catalyzes the transfer of a phosphate group to glutamate to form L-glutamate 5-phosphate. The chain is Glutamate 5-kinase from Methanosarcina mazei (strain ATCC BAA-159 / DSM 3647 / Goe1 / Go1 / JCM 11833 / OCM 88) (Methanosarcina frisia).